We begin with the raw amino-acid sequence, 316 residues long: Acetyl-coenzyme A carboxylase carboxyl transferase subunit alpha (316 aa).

Residues 39-293 (RLQDKSKALT…RGELLTQLKM (255 aa)) form the CoA carboxyltransferase C-terminal domain.

The protein belongs to the AccA family. Acetyl-CoA carboxylase is a heterohexamer composed of biotin carboxyl carrier protein (AccB), biotin carboxylase (AccC) and two subunits each of ACCase subunit alpha (AccA) and ACCase subunit beta (AccD).

The protein resides in the cytoplasm. The enzyme catalyses N(6)-carboxybiotinyl-L-lysyl-[protein] + acetyl-CoA = N(6)-biotinyl-L-lysyl-[protein] + malonyl-CoA. The protein operates within lipid metabolism; malonyl-CoA biosynthesis; malonyl-CoA from acetyl-CoA: step 1/1. Its function is as follows. Component of the acetyl coenzyme A carboxylase (ACC) complex. First, biotin carboxylase catalyzes the carboxylation of biotin on its carrier protein (BCCP) and then the CO(2) group is transferred by the carboxyltransferase to acetyl-CoA to form malonyl-CoA. The sequence is that of Acetyl-coenzyme A carboxylase carboxyl transferase subunit alpha from Pseudomonas aeruginosa (strain LESB58).